Here is a 386-residue protein sequence, read N- to C-terminus: Bifunctional enzyme IspD/IspF (386 aa).

Residues 1–229 (MIRGERVIGI…RARALLEAPV (229 aa)) form a 2-C-methyl-D-erythritol 4-phosphate cytidylyltransferase region. The interval 230–386 (ATGVGYDTHR…AIALLVRAAG (157 aa)) is 2-C-methyl-D-erythritol 2,4-cyclodiphosphate synthase. A divalent metal cation-binding residues include Asp-236 and His-238. Residues 236–238 (DTH) and 261–262 (HS) contribute to the 4-CDP-2-C-methyl-D-erythritol 2-phosphate site. His-269 lines the a divalent metal cation pocket. Residues 283–285 (DLG), 288–292 (FPDTD), 359–362 (TTGE), Phe-366, and Arg-369 contribute to the 4-CDP-2-C-methyl-D-erythritol 2-phosphate site.

It in the N-terminal section; belongs to the IspD/TarI cytidylyltransferase family. IspD subfamily. In the C-terminal section; belongs to the IspF family. A divalent metal cation is required as a cofactor.

It carries out the reaction 2-C-methyl-D-erythritol 4-phosphate + CTP + H(+) = 4-CDP-2-C-methyl-D-erythritol + diphosphate. It catalyses the reaction 4-CDP-2-C-methyl-D-erythritol 2-phosphate = 2-C-methyl-D-erythritol 2,4-cyclic diphosphate + CMP. Its pathway is isoprenoid biosynthesis; isopentenyl diphosphate biosynthesis via DXP pathway; isopentenyl diphosphate from 1-deoxy-D-xylulose 5-phosphate: step 2/6. The protein operates within isoprenoid biosynthesis; isopentenyl diphosphate biosynthesis via DXP pathway; isopentenyl diphosphate from 1-deoxy-D-xylulose 5-phosphate: step 4/6. Bifunctional enzyme that catalyzes the formation of 4-diphosphocytidyl-2-C-methyl-D-erythritol from CTP and 2-C-methyl-D-erythritol 4-phosphate (MEP) (IspD), and catalyzes the conversion of 4-diphosphocytidyl-2-C-methyl-D-erythritol 2-phosphate (CDP-ME2P) to 2-C-methyl-D-erythritol 2,4-cyclodiphosphate (ME-CPP) with a corresponding release of cytidine 5-monophosphate (CMP) (IspF). The polypeptide is Bifunctional enzyme IspD/IspF (Anaeromyxobacter dehalogenans (strain 2CP-C)).